The sequence spans 154 residues: 3-hydroxyacyl-[acyl-carrier-protein] dehydratase FabZ (154 aa).

Histidine 57 is an active-site residue.

This sequence belongs to the thioester dehydratase family. FabZ subfamily.

Its subcellular location is the cytoplasm. It catalyses the reaction a (3R)-hydroxyacyl-[ACP] = a (2E)-enoyl-[ACP] + H2O. Functionally, involved in unsaturated fatty acids biosynthesis. Catalyzes the dehydration of short chain beta-hydroxyacyl-ACPs and long chain saturated and unsaturated beta-hydroxyacyl-ACPs. In Sinorhizobium medicae (strain WSM419) (Ensifer medicae), this protein is 3-hydroxyacyl-[acyl-carrier-protein] dehydratase FabZ.